A 123-amino-acid chain; its full sequence is Large ribosomal subunit protein uL14 (123 aa).

The protein belongs to the universal ribosomal protein uL14 family. As to quaternary structure, part of the 50S ribosomal subunit. Forms a cluster with proteins L3 and L19. In the 70S ribosome, L14 and L19 interact and together make contacts with the 16S rRNA in bridges B5 and B8.

Its function is as follows. Binds to 23S rRNA. Forms part of two intersubunit bridges in the 70S ribosome. This is Large ribosomal subunit protein uL14 from Photobacterium profundum (strain SS9).